An 872-amino-acid chain; its full sequence is Protein SCD5 (872 aa).

Disordered regions lie at residues 1-98 (MSFD…SGGD) and 209-239 (PKPRPILSSENHEEVYEEVEDDDSSAKTGDQ). The segment covering 48 to 85 (FWDQGSRSHSDTTLSYRNNHSNTAADNATNVSSPQKDN) has biased composition (polar residues). The KKRVK motif; Required for interaction with GLC7, endocytosis and actin cytoskeleton organization motif lies at 272-276 (KKVRF). 2 disordered regions span residues 280–321 (ITFQ…LDFT) and 338–358 (SGLVSSLPSEQQETEEEKKVL). Polar residues-rich tracts occupy residues 284–296 (DPPNLNQESSNNS) and 339–348 (GLVSSLPSEQ). Repeat copies occupy residues 405–424 (QLPLEPLKPTATGSANHLVR), 439–458 (QTGLQPLKPTATGSANYLMR), 479–498 (SGGLQPLKPTATGSANYLMK), 534–545 (SPNITLPQSNQQ), 564–575 (SPQHTYSNNVRI), 593–604 (PPQNTLPQHQQS), 608–619 (SPQNTIPQHQRS), 623–634 (SPQNTFTQNQPI), 636–647 (SPQHTYSNNQAT), 650–661 (SPQNTYTNNQQQ), 683–694 (PPQHMYSNVQKQ), and 717–728 (SPQNAANSYFQS). The tract at residues 405–448 (QLPLEPLKPTATGSANHLVREEYNQGLHPSNGAIQTGLQPLKPT) is 3 X 20 AA approximate repeats. Thr-416 and Thr-450 each carry phosphothreonine; by PRK1. A disordered region spans residues 460–489 (HMEQPQSIKPSSTPETVTNSGGLQPLKPTA). The segment covering 462-481 (EQPQSIKPSSTPETVTNSGG) has biased composition (polar residues). Thr-490 carries the phosphothreonine; by PRK1 modification. Disordered stretches follow at residues 516–571 (QFTN…TYSN) and 591–620 (AFPPQNTLPQHQQSHLLSPQNTIPQHQRSQ). The 9 X 12 AA approximate repeats stretch occupies residues 534-728 (SPNITLPQSN…QNAANSYFQS (195 aa)). The residue at position 564 (Ser-564) is a Phosphoserine. Positions 594–620 (PQNTLPQHQQSHLLSPQNTIPQHQRSQ) are enriched in polar residues. Residues 649 to 681 (ISPQNTYTNNQQQPQHLPPPPPPRAQQQQQGAI) form a disordered region. The span at 651–663 (PQNTYTNNQQQPQ) shows a compositional bias: low complexity. Polar residues predominate over residues 697-727 (LVPTQPSYTNSPSIQSPNFLSPQNAANSYFQ). Disordered stretches follow at residues 697–758 (LVPT…ISSF) and 806–838 (NSDIHSQPNKPNYGMLGQQVHQQQQQQQQQFPF). Positions 728–745 (SLLSSSPSPNPTPSNAST) are enriched in low complexity. Composition is skewed to polar residues over residues 746–758 (VNGNNASNGISSF) and 806–815 (NSDIHSQPNK). Residues 823-835 (QQVHQQQQQQQQQ) are compositionally biased toward low complexity.

In terms of assembly, interacts (via KKVRF motif) with phosphatase GLC7. In terms of processing, phosphorylation by PRK1 and/or AKL1 on Thr-416, Thr-450 and Thr-490 of repeats 1-1, 1-2 and/or 1-3 negatively regulates SCD5 function in endocytosis and actin cytoskeleton organization.

Its subcellular location is the membrane. Regulates both fluid phase and receptor-mediated endocytosis. Involved in vesicular transport at a late stage of the secretory pathway. Regulates actin cytoskeleton organization. The sequence is that of Protein SCD5 (SCD5) from Saccharomyces cerevisiae (strain ATCC 204508 / S288c) (Baker's yeast).